Consider the following 469-residue polypeptide: Dihydrolipoyl dehydrogenase (469 aa).

FAD is bound by residues 40 to 48 (EKASLGGVC), lysine 57, and alanine 120. Cysteine 48 and cysteine 53 form a disulfide bridge. Residues 186-190 (GGGAI), glutamate 209, and 275-278 (AVGV) each bind NAD(+). FAD contacts are provided by aspartate 317 and alanine 325. Residue histidine 450 is the Proton acceptor of the active site.

The protein belongs to the class-I pyridine nucleotide-disulfide oxidoreductase family. In terms of assembly, homodimer. FAD is required as a cofactor.

Its subcellular location is the cytoplasm. The catalysed reaction is N(6)-[(R)-dihydrolipoyl]-L-lysyl-[protein] + NAD(+) = N(6)-[(R)-lipoyl]-L-lysyl-[protein] + NADH + H(+). In terms of biological role, lipoamide dehydrogenase is a component of the alpha-ketoacid dehydrogenase complexes. In Chlorobaculum parvum (strain DSM 263 / NCIMB 8327) (Chlorobium vibrioforme subsp. thiosulfatophilum), this protein is Dihydrolipoyl dehydrogenase (lpd).